A 450-amino-acid polypeptide reads, in one-letter code: Phosphomethylpyrimidine synthase (450 aa).

Substrate is bound by residues Asn80, Met109, Tyr138, His173, Ser193–Gly195, Asp234–Arg237, and Glu273. Residue His277 coordinates Zn(2+). Tyr300 is a binding site for substrate. His341 provides a ligand contact to Zn(2+). The [4Fe-4S] cluster site is built by Cys421, Cys424, and Cys429.

The protein belongs to the ThiC family. Homodimer. [4Fe-4S] cluster is required as a cofactor.

The enzyme catalyses 5-amino-1-(5-phospho-beta-D-ribosyl)imidazole + S-adenosyl-L-methionine = 4-amino-2-methyl-5-(phosphooxymethyl)pyrimidine + CO + 5'-deoxyadenosine + formate + L-methionine + 3 H(+). The protein operates within cofactor biosynthesis; thiamine diphosphate biosynthesis. Catalyzes the synthesis of the hydroxymethylpyrimidine phosphate (HMP-P) moiety of thiamine from aminoimidazole ribotide (AIR) in a radical S-adenosyl-L-methionine (SAM)-dependent reaction. In Campylobacter fetus subsp. fetus (strain 82-40), this protein is Phosphomethylpyrimidine synthase.